The sequence spans 123 residues: Ribonuclease P protein component (123 aa).

The protein belongs to the RnpA family. Consists of a catalytic RNA component (M1 or rnpB) and a protein subunit.

The enzyme catalyses Endonucleolytic cleavage of RNA, removing 5'-extranucleotides from tRNA precursor.. Its function is as follows. RNaseP catalyzes the removal of the 5'-leader sequence from pre-tRNA to produce the mature 5'-terminus. It can also cleave other RNA substrates such as 4.5S RNA. The protein component plays an auxiliary but essential role in vivo by binding to the 5'-leader sequence and broadening the substrate specificity of the ribozyme. The sequence is that of Ribonuclease P protein component from Streptococcus pneumoniae (strain Hungary19A-6).